The primary structure comprises 221 residues: Thiamine-phosphate synthase (221 aa).

Residues 49–53 (QFREK) and Asn-85 each bind 4-amino-2-methyl-5-(diphosphooxymethyl)pyrimidine. Positions 86 and 105 each coordinate Mg(2+). Ser-124 is a binding site for 4-amino-2-methyl-5-(diphosphooxymethyl)pyrimidine. 2-[(2R,5Z)-2-carboxy-4-methylthiazol-5(2H)-ylidene]ethyl phosphate is bound at residue 151-153 (TQS). Lys-154 serves as a coordination point for 4-amino-2-methyl-5-(diphosphooxymethyl)pyrimidine. 2-[(2R,5Z)-2-carboxy-4-methylthiazol-5(2H)-ylidene]ethyl phosphate is bound by residues Gly-183 and 203–204 (IS).

It belongs to the thiamine-phosphate synthase family. Mg(2+) is required as a cofactor.

The catalysed reaction is 2-[(2R,5Z)-2-carboxy-4-methylthiazol-5(2H)-ylidene]ethyl phosphate + 4-amino-2-methyl-5-(diphosphooxymethyl)pyrimidine + 2 H(+) = thiamine phosphate + CO2 + diphosphate. The enzyme catalyses 2-(2-carboxy-4-methylthiazol-5-yl)ethyl phosphate + 4-amino-2-methyl-5-(diphosphooxymethyl)pyrimidine + 2 H(+) = thiamine phosphate + CO2 + diphosphate. It catalyses the reaction 4-methyl-5-(2-phosphooxyethyl)-thiazole + 4-amino-2-methyl-5-(diphosphooxymethyl)pyrimidine + H(+) = thiamine phosphate + diphosphate. The protein operates within cofactor biosynthesis; thiamine diphosphate biosynthesis; thiamine phosphate from 4-amino-2-methyl-5-diphosphomethylpyrimidine and 4-methyl-5-(2-phosphoethyl)-thiazole: step 1/1. Its function is as follows. Condenses 4-methyl-5-(beta-hydroxyethyl)thiazole monophosphate (THZ-P) and 2-methyl-4-amino-5-hydroxymethyl pyrimidine pyrophosphate (HMP-PP) to form thiamine monophosphate (TMP). This chain is Thiamine-phosphate synthase, found in Histophilus somni (strain 129Pt) (Haemophilus somnus).